Consider the following 461-residue polypeptide: Argininosuccinate lyase (461 aa).

Belongs to the lyase 1 family. Argininosuccinate lyase subfamily.

It localises to the cytoplasm. It carries out the reaction 2-(N(omega)-L-arginino)succinate = fumarate + L-arginine. It participates in amino-acid biosynthesis; L-arginine biosynthesis; L-arginine from L-ornithine and carbamoyl phosphate: step 3/3. This is Argininosuccinate lyase from Bacillus subtilis (strain 168).